The chain runs to 106 residues: Starvation responsive small protein A (106 aa).

Residues 15–32 (ILLVNAGLISAYGVRIIF) form a helical membrane-spanning segment.

Its subcellular location is the cell membrane. In terms of biological role, involved in starvation response and aggregation stage of the life cycle. May be involved in fruiting body morphogenesis and spore formation. The protein is Starvation responsive small protein A of Dictyostelium discoideum (Social amoeba).